A 63-amino-acid polypeptide reads, in one-letter code: Arabinogalactan protein 22 (63 aa).

Residues 1 to 27 (MASLKFPLEILAVFVIISVILLPIAQS) form the signal peptide. 4-hydroxyproline is present on residues Pro-32, Pro-34, and Pro-36. Pro-32, Pro-34, and Pro-36 each carry an O-linked (Ara...) hydroxyproline glycan. The GPI-anchor amidated serine moiety is linked to residue Ser-38. Positions 39-63 (DGTSIDQGIAYVLMMVALALTYFIH) are cleaved as a propeptide — removed in mature form.

It belongs to the AG-peptide AGP family. Contains 4-hydroxyproline; hydroxylated on Pro-32, Pro-34 and Pro-36. In terms of processing, O-glycosylated on hydroxyprolines; noncontiguous hydroxylproline residues are glycosylated with arabinogalactan.

The protein localises to the cell membrane. In terms of biological role, proteoglycan that seems to be implicated in diverse developmental roles such as differentiation, cell-cell recognition, embryogenesis and programmed cell death. The protein is Arabinogalactan protein 22 of Arabidopsis thaliana (Mouse-ear cress).